Reading from the N-terminus, the 219-residue chain is Guanylate kinase (219 aa).

In terms of domain architecture, Guanylate kinase-like spans 15–194; that stretch reads GLMFVLSSPS…AFESVKAILR (180 aa). 22–29 contacts ATP; sequence SPSGAGKT.

The protein belongs to the guanylate kinase family.

It is found in the cytoplasm. The catalysed reaction is GMP + ATP = GDP + ADP. Its function is as follows. Essential for recycling GMP and indirectly, cGMP. In Rhodopseudomonas palustris (strain BisB5), this protein is Guanylate kinase.